The following is an 883-amino-acid chain: Lethal(3)malignant brain tumor-like protein 3 (883 aa).

Residues 1 to 64 (MTESASSTSG…VKKATATTTW (64 aa)) form an interaction with RBPJ. Required for transcription repressor activity on Notch target genes region. Residues 146 to 156 (HAKDKDQKDER) are compositionally biased toward basic and acidic residues. The tract at residues 146-223 (HAKDKDQKDE…RGDSAVLKQG (78 aa)) is disordered. 2 stretches are compositionally biased toward acidic residues: residues 157–166 (DGGEDNDEED) and 185–194 (DDGEERDDEM). MBT repeat units follow at residues 232-332 (WCWA…LRPP), 340-439 (FNWQ…LITP), and 448-543 (FSWD…LQAP). The segment at 549–593 (LMEPSETGGCPTLGCRGVGHFKKSRYLGTQSGANCPYSEINLSKE) adopts a CCHHC-type; degenerate zinc-finger fold. The disordered stretch occupies residues 595–768 (IFPDRLSGDT…TQQQAQTQQQ (174 aa)). Residues 616–662 (KRMDTRESSSSPETREKHANNFKEDSEKKKENEVKTSAEAKVVREEP) are compositionally biased toward basic and acidic residues. A Glycyl lysine isopeptide (Lys-Gly) (interchain with G-Cter in SUMO2) cross-link involves residue K638. 2 stretches are compositionally biased toward low complexity: residues 663–742 (TPSV…QQPQ) and 749–768 (QPQQ…TQQQ). In terms of domain architecture, SAM spans 811 to 875 (WSTDEVSEFI…FNSILMFKAA (65 aa)).

Interacts with RNF2. Interacts (via SAM domain) with SAMD1 (via SAM domain); the interaction mediates L3MBTL3 binding to chromatin. Interacts with RBPJ; the interaction is required for L3MBTL3 localization to chromatin and is impaired the Notch-derived peptides containing the intracellular domain (NICD). Interacts (via SAM domain) with KDM1A. Interacts with DCAF5. Interacts with DNMT1. Interacts with E2F1. Interacts with SOX2. Interacts with SFMBT1. In terms of tissue distribution, detected in hematopoietic progenitor cells in fetal liver. Detected in adult bone marrow, heart, brain, spleen, lung, liver, kidney and testis.

It localises to the nucleus. Functionally, is a negative regulator of Notch target genes expression, required for RBPJ-mediated transcriptional repression. It recruits KDM1A to Notch-responsive elements and promotes KDM1A-mediated H3K4me demethylation. Involved in the regulation of ubiquitin-dependent degradation of a set of methylated non-histone proteins, including SOX2. It acts as an adapter recruiting the CRL4-DCAF5 E3 ubiquitin ligase complex to methylated target proteins. Also involved in the regulation of ubiquitin-dependent degradation of methylated DNMT1 and E2F1. Required for normal maturation of myeloid progenitor cells. In Mus musculus (Mouse), this protein is Lethal(3)malignant brain tumor-like protein 3.